Here is a 316-residue protein sequence, read N- to C-terminus: Peroxidase 31 (316 aa).

A signal peptide spans 1–19; that stretch reads MASLKSLFLLFLFFFTAQS. 4 disulfides stabilise this stretch: cysteine 30-cysteine 111, cysteine 63-cysteine 68, cysteine 117-cysteine 312, and cysteine 196-cysteine 222. Catalysis depends on histidine 61, which acts as the Proton acceptor. Residues aspartate 62, glycine 67, aspartate 69, and serine 71 each coordinate Ca(2+). Proline 159 contacts substrate. Heme b is bound at residue histidine 189. A Ca(2+)-binding site is contributed by serine 190. Asparagine 206 is a glycosylation site (N-linked (GlcNAc...) asparagine). Aspartate 236, threonine 239, and aspartate 244 together coordinate Ca(2+).

It belongs to the peroxidase family. Classical plant (class III) peroxidase subfamily. Heme b is required as a cofactor. The cofactor is Ca(2+).

It is found in the secreted. It carries out the reaction 2 a phenolic donor + H2O2 = 2 a phenolic radical donor + 2 H2O. Functionally, removal of H(2)O(2), oxidation of toxic reductants, biosynthesis and degradation of lignin, suberization, auxin catabolism, response to environmental stresses such as wounding, pathogen attack and oxidative stress. These functions might be dependent on each isozyme/isoform in each plant tissue. The protein is Peroxidase 31 (PER31) of Arabidopsis thaliana (Mouse-ear cress).